The sequence spans 811 residues: MRISLNWLRELVQVDLEPEVLAEKLTLAGFEVEEIEDRRTWAAGVVVGRVLEREQHPNADRLSVCQVEIGQAEPVTIVCGASNVRADIWVAVATLGSYLPCIDLKLKPTKLRGVRSEGMICSLSELGLTKESEGIHIFPEDAGLQAGQPVGPLLGLDDVVLDLTSTANRADALSLIGIAREVRALTAATLTLPEVGTADLSRTTLSWRSLYKVKPGSHYSGTIIEGVTIAPSPEWLQKRLQLAGIRTINNVVDITNYILLEYGQPLHAFDRQKLQAIAGSSDLAIGVRSAQAGETLKTLDDQERTLAEAALVITAGDCPVALAGVMGGADSEVSQETTQLLLEAAWFEPIAVRRSARSQGLRTEASARYERGVNVTELPIATQRAIDLLLQIAGGTVISQTVATTTQTEPEHSITLRLQRINELLGPVQAEDEELKDLGADDIERLLTAIGCHLTLVDDAVWQVRVPPYRYRDLEREIDLIEEVARLYGYDNFGETLPPLGSDEGALSIDESLRRQIRAVCRGVGLTELQHYSLVKPGSDRQVHLANPLLAEYSALRLDLLSGLIDAFQYNWEQGNGPLWGFEIGRIFWREEDGFFEADRMGGILGGDPSRGRWQRGGKEQAIDWYAAKGVLEEIFERFGLTIEFQPDRQDDRFHPGRTASLWLQGDRLGRFGQLHPSLCEGRGLPAEVYAFELDLDVWLDHLDQPERQVPRFQPYSSFPASDRDLAFFVDQSVTVAELERIIRRQGGALLSEVELFDQYCGEHVPENQRSLAFRLTYRASDRTLTEAEVEPVHDQVRQSLVERFRVTLRS.

The region spanning 39–151 (RTWAAGVVVG…AGLQAGQPVG (113 aa)) is the tRNA-binding domain. One can recognise a B5 domain in the interval 409–495 (EPEHSITLRL…RLYGYDNFGE (87 aa)). Asp473, Asp479, Glu482, and Glu483 together coordinate Mg(2+). Residues 717–810 (SSFPASDRDL…LVERFRVTLR (94 aa)) enclose the FDX-ACB domain.

The protein belongs to the phenylalanyl-tRNA synthetase beta subunit family. Type 1 subfamily. In terms of assembly, tetramer of two alpha and two beta subunits. Mg(2+) is required as a cofactor.

Its subcellular location is the cytoplasm. The catalysed reaction is tRNA(Phe) + L-phenylalanine + ATP = L-phenylalanyl-tRNA(Phe) + AMP + diphosphate + H(+). The chain is Phenylalanine--tRNA ligase beta subunit from Synechococcus sp. (strain ATCC 27144 / PCC 6301 / SAUG 1402/1) (Anacystis nidulans).